A 171-amino-acid chain; its full sequence is Acetyltransferase PA2271 (171 aa).

The 160-residue stretch at Tyr-3 to Asp-162 folds into the N-acetyltransferase domain. CoA is bound by residues Leu-84–Ile-86 and Pro-128–Tyr-130.

Its function is as follows. Catalyzes the transfer of an acetyl group from acetyl coenzyme A (AcCoA) to an acceptor substrate and releases both CoA and the acetylated product. It can use a variety of substrates including spermidine, spermine and N(8)-acetylspermidine, 7-aminocephalosporanic acid, colistin and thiamine. This Pseudomonas aeruginosa (strain ATCC 15692 / DSM 22644 / CIP 104116 / JCM 14847 / LMG 12228 / 1C / PRS 101 / PAO1) protein is Acetyltransferase PA2271.